The following is a 428-amino-acid chain: Adenylosuccinate synthetase (428 aa).

Residues 12–18 (GDEGKGK) and 40–42 (GHT) contribute to the GTP site. Aspartate 13 functions as the Proton acceptor in the catalytic mechanism. Residues aspartate 13 and glycine 40 each contribute to the Mg(2+) site. Residues 13-16 (DEGK), 38-41 (NAGH), threonine 127, arginine 141, glutamine 222, threonine 237, and arginine 301 each bind IMP. The active-site Proton donor is histidine 41. 297 to 303 (TVTKRPR) lines the substrate pocket. GTP contacts are provided by residues arginine 303, 329-331 (CLD), and 411-413 (SVG).

This sequence belongs to the adenylosuccinate synthetase family. In terms of assembly, homodimer. It depends on Mg(2+) as a cofactor.

The protein resides in the cytoplasm. It catalyses the reaction IMP + L-aspartate + GTP = N(6)-(1,2-dicarboxyethyl)-AMP + GDP + phosphate + 2 H(+). It participates in purine metabolism; AMP biosynthesis via de novo pathway; AMP from IMP: step 1/2. Plays an important role in the de novo pathway of purine nucleotide biosynthesis. Catalyzes the first committed step in the biosynthesis of AMP from IMP. In Levilactobacillus brevis (strain ATCC 367 / BCRC 12310 / CIP 105137 / JCM 1170 / LMG 11437 / NCIMB 947 / NCTC 947) (Lactobacillus brevis), this protein is Adenylosuccinate synthetase.